A 616-amino-acid polypeptide reads, in one-letter code: Prolactin receptor (616 aa).

An N-terminal signal peptide occupies residues 1-24 (MKENVASMIVFLLLLFLNIRLLKG). Over 25 to 234 (QSPPGKPFIF…QIPNDFTMKD (210 aa)) the chain is Extracellular. 2 Fibronectin type-III domains span residues 27–128 (PPGK…VEPD) and 129–229 (PPVN…IPND). Cys-36 and Cys-46 form a disulfide bridge. Asn-59 is a glycosylation site (N-linked (GlcNAc...) asparagine). Cys-75 and Cys-86 form a disulfide bridge. N-linked (GlcNAc...) asparagine glycosylation is found at Asn-104 and Asn-132. 2 residues coordinate Zn(2+): Asp-211 and His-212. The WSXWS motif motif lies at 215 to 219 (WSVWS). A helical transmembrane segment spans residues 235 to 258 (ITVWIFVAVLSTIICLIMVWAVAL). The Cytoplasmic segment spans residues 259–616 (KGYSMVTCIF…DPACFMHSLH (358 aa)). Positions 267–275 (IFPPVPGPK) match the Box 1 motif motif. 3 disordered regions span residues 326 to 375 (MPAH…STFH), 454 to 492 (QSSKTTEAAGEEKATKQREVESSHSKAEQDTGWLLPKEK), and 568 to 593 (ESTKEAPPSPSQNQAEKDLSSFSTAP). The span at 463–482 (GEEKATKQREVESSHSKAEQ) shows a compositional bias: basic and acidic residues.

This sequence belongs to the type I cytokine receptor family. Type 1 subfamily. In terms of assembly, interacts with SMARCA1. Interacts with NEK3 and VAV2 and this interaction is prolactin-dependent.

The protein localises to the membrane. This is a receptor for the anterior pituitary hormone prolactin. This is Prolactin receptor (PRLR) from Oryctolagus cuniculus (Rabbit).